A 444-amino-acid polypeptide reads, in one-letter code: Enolase (444 aa).

His-163 and Glu-172 together coordinate substrate. Glu-215 (proton donor) is an active-site residue. Residues Asp-250, Glu-300, and Asp-327 each coordinate Mg(2+). Positions 300 and 327 each coordinate substrate. Catalysis depends on Lys-352, which acts as the Proton acceptor. Residues 379–382 (SHRS) and Lys-403 each bind substrate.

This sequence belongs to the enolase family. In terms of assembly, homodimer. The cofactor is Mg(2+).

The protein localises to the cytoplasm. The enzyme catalyses (2R)-2-phosphoglycerate = phosphoenolpyruvate + H2O. Its pathway is carbohydrate degradation; glycolysis; pyruvate from D-glyceraldehyde 3-phosphate: step 4/5. The polypeptide is Enolase (PGH1) (Mesembryanthemum crystallinum (Common ice plant)).